The chain runs to 145 residues: Probable 4-amino-4-deoxy-L-arabinose-phosphoundecaprenol flippase subunit ArnF (145 aa).

The Cytoplasmic portion of the chain corresponds to 1–3 (MAH). The helical transmembrane segment at 4–24 (LTLSIRGLLLALMSVLLISVA) threads the bilayer. Topologically, residues 25–61 (QLSMKWGMGTLNQLWSDLVMLWQGEDYSSLFSQALAP) are periplasmic. The helical transmembrane segment at 62-82 (VMAVGAGLFCYALSMACWVMA) threads the bilayer. At 83-89 (LKRLPLS) the chain is on the cytoplasmic side. Residues 90 to 110 (IAYPLLSLSYVLVYLGAVYLP) form a helical membrane-spanning segment. Over 111-114 (WLNE) the chain is Periplasmic. A helical transmembrane segment spans residues 115-135 (PLSWVKGTGIFLILLGLIFVL). The Cytoplasmic segment spans residues 136-145 (PKKNQTSDKS).

It belongs to the ArnF family. Heterodimer of ArnE and ArnF.

Its subcellular location is the cell inner membrane. It functions in the pathway bacterial outer membrane biogenesis; lipopolysaccharide biosynthesis. Translocates 4-amino-4-deoxy-L-arabinose-phosphoundecaprenol (alpha-L-Ara4N-phosphoundecaprenol) from the cytoplasmic to the periplasmic side of the inner membrane. The polypeptide is Probable 4-amino-4-deoxy-L-arabinose-phosphoundecaprenol flippase subunit ArnF (Shewanella sediminis (strain HAW-EB3)).